The sequence spans 980 residues: MPAELLLLLIVAFASPSCQVLSSLRMAAILDDQTVCGRGERLALALAREQINGIIEVPAKARVEVDIFELQRDSQYETTDTMCQILPKGVVSVLGPSSSPASASTVSHICGEKEIPHIKVGPEETPRLQYLRFASVSLYPSNEDVSLAVSRILKSFNYPSASLICAKAECLLRLEELVRGFLISKETLSVRMLDDSRDPTPLLKEIRDDKVSTIIIDANASISHLILRKASELGMTSAFYKYILTTMDFPILHLDGIVEDSSNILGFSMFNTSHPFYPEFVRSLNMSWRENCEASTYLGPALSAALMFDAVHVVVSAVRELNRSQEIGVKPLACTSANIWPHGTSLMNYLRMVEYDGLTGRVEFNSKGQRTNYTLRILEKSRQGHREIGVWYSNRTLAMNATTLDINLSQTLANKTLVVTTILENPYVMRRPNFQALSGNERFEGFCVDMLRELAELLRFRYRLRLVEDGLYGAPEPNGSWTGMVGELINRKADLAVAAFTITAEREKVIDFSKPFMTLGISILYRVHMGRKPGYFSFLDPFSPAVWLFMLLAYLAVSCVLFLAARLSPYEWYNPHPCLRARPHILENQYTLGNSLWFPVGGFMQQGSEIMPRALSTRCVSGVWWAFTLIIISSYTANLAAFLTVQRMEVPVESADDLADQTNIEYGTIHAGSTMTFFQNSRYQTYQRMWNYMQSKQPSVFVKSTEEGIARVLNSRYAFLLESTMNEYHRRLNCNLTQIGGLLDTKGYGIGMPLGSPFRDEITLAILQLQENNRLEILKRKWWEGGRCPKEEDHRAKGLGMENIGGIFIVLICGLIIAVFVAVMEFIWSTRRSAESEEVSVCQEMLQELRHAVSCRKTSRSRRRRRPGGPSRALLSLRAVREMRLSNGKLYSAGAGGDAGSAHGGPQRLLDDPGPPSGARPAAPTPCTHVRVCQECRRIQALRASGAGAPPRGLGVPAEATSPPRPRPGPAGPRELAEHE.

Residues 1–14 (MPAELLLLLIVAFA) form the signal peptide. The Extracellular portion of the chain corresponds to 15–544 (SPSCQVLSSL…YFSFLDPFSP (530 aa)). 3 disulfide bridges follow: C36–C292, C83–C334, and C165–C170. 10 N-linked (GlcNAc...) asparagine glycosylation sites follow: N219, N271, N285, N322, N372, N394, N400, N407, N414, and N478. Residues 545–565 (AVWLFMLLAYLAVSCVLFLAA) traverse the membrane as a helical segment. Over 566–622 (RLSPYEWYNPHPCLRARPHILENQYTLGNSLWFPVGGFMQQGSEIMPRALSTRCVSG) the chain is Cytoplasmic. The helical transmembrane segment at 623 to 643 (VWWAFTLIIISSYTANLAAFL) threads the bilayer. Residues 644–803 (TVQRMEVPVE…HRAKGLGMEN (160 aa)) lie on the Extracellular side of the membrane. N735 carries N-linked (GlcNAc...) asparagine glycosylation. A helical membrane pass occupies residues 804–824 (IGGIFIVLICGLIIAVFVAVM). Residues 825–980 (EFIWSTRRSA…AGPRELAEHE (156 aa)) are Cytoplasmic-facing. Disordered regions lie at residues 891 to 927 (YSAGAGGDAGSAHGGPQRLLDDPGPPSGARPAAPTPC) and 944 to 980 (ASGAGAPPRGLGVPAEATSPPRPRPGPAGPRELAEHE). The span at 894 to 903 (GAGGDAGSAH) shows a compositional bias: gly residues.

It belongs to the glutamate-gated ion channel (TC 1.A.10.1) family. GRIK5 subfamily. Homotetramer. Heterotetramer with GRIK2. Can form functional heteromeric receptors with GRIK1 and GRIK2. Can form functional heteromeric receptors with GRIK3.

The protein localises to the cell membrane. The protein resides in the postsynaptic cell membrane. It localises to the presynaptic cell membrane. Its function is as follows. Ionotropic glutamate receptor that functions as a cation-permeable ligand-gated ion channel, gated by L-glutamate and the glutamatergic agonist kainic acid. Cannot form functional channels on its own and produces channel activity only in heteromeric assembly with GRIK1 and GRIK2 subunits. Can form functional heteromeric receptors with GRIK3. The polypeptide is Glutamate receptor ionotropic, kainate 5 (GRIK5) (Homo sapiens (Human)).